The primary structure comprises 187 residues: MTTQTSTGDRLVHQEIIGSRRLSNYLWAIIVTMGGIGFLLSGISSYLKVNLLIVADPTQLNFLPQGIAMSFYGLLGTIYGIFLWLTVIWDLGGGYNDFNQESGQIMIFRRGFPGKNRKVEFNCTTENVQSIKVDIKEGLNPRRAIYLCLKDRRQIPLTRVGQPLALSKLENEAAQLAKFLQVPLEGL.

Helical transmembrane passes span 25-45 (YLWA…GISS) and 69-89 (MSFY…TVIW).

It belongs to the Ycf4 family.

It is found in the cellular thylakoid membrane. Functionally, seems to be required for the assembly of the photosystem I complex. This is Photosystem I assembly protein Ycf4 from Trichodesmium erythraeum (strain IMS101).